The sequence spans 261 residues: Src-like-adapter 2 (261 aa).

Positions 1 to 10 (MGSLPSRRKS) are enriched in basic residues. The disordered stretch occupies residues 1–31 (MGSLPSRRKSLPSPSLSSSVQGQGPVTMEAE). G2 carries N-myristoyl glycine lipidation. Residues 32–92 (RSKATAVALG…PSVHVAKVSH (61 aa)) form the SH3 domain. Positions 94–191 (WLYEGLSREK…DICCLLKEPC (98 aa)) constitute an SH2 domain. The interval 195–261 (RAGPLPGKDI…NDEAVSLDDA (67 aa)) is SLA C-terminal.

Interacts (via SH2 domain) with ZAP70 (phosphorylated) and CD3Z (phosphorylated). Interacts (via SH2 domain) with CSF1R (phosphorylated). Interacts (via its C-terminal domain) with CBL (phosphorylated). Phosphorylated by CSF1R. Predominantly expressed in immune system, with highest levels in peripheral blood leukocytes. Expressed in spleen, thymus and lymph nodes. Expressed in T-cells as well as in monocytes, and at low level in B-cells. Also detected in placenta, prostate, skin, retina and colon.

Its subcellular location is the cytoplasm. The protein resides in the cell membrane. The protein localises to the cytoplasmic vesicle. Adapter protein, which negatively regulates T-cell receptor (TCR) signaling. Inhibits T-cell antigen-receptor induced activation of nuclear factor of activated T-cells. May act by linking signaling proteins such as ZAP70 with CBL, leading to a CBL dependent degradation of signaling proteins. This Homo sapiens (Human) protein is Src-like-adapter 2 (SLA2).